The primary structure comprises 439 residues: Xylose isomerase (439 aa).

Active-site residues include histidine 101 and aspartate 104. Residues glutamate 232, glutamate 268, histidine 271, aspartate 296, aspartate 307, aspartate 309, and aspartate 339 each coordinate Mg(2+).

Belongs to the xylose isomerase family. Homotetramer. It depends on Mg(2+) as a cofactor.

The protein resides in the cytoplasm. It carries out the reaction alpha-D-xylose = alpha-D-xylulofuranose. The polypeptide is Xylose isomerase (xylA) (Thermoanaerobacterium saccharolyticum).